The chain runs to 497 residues: Serine hydroxymethyltransferase (497 aa).

(6S)-5,6,7,8-tetrahydrofolate is bound by residues Leu176 and 180–182; that span reads GHL. Lys289 is subject to N6-(pyridoxal phosphate)lysine.

It belongs to the SHMT family. As to quaternary structure, homodimer. Requires pyridoxal 5'-phosphate as cofactor.

It is found in the cytoplasm. It carries out the reaction (6R)-5,10-methylene-5,6,7,8-tetrahydrofolate + glycine + H2O = (6S)-5,6,7,8-tetrahydrofolate + L-serine. It functions in the pathway one-carbon metabolism; tetrahydrofolate interconversion. It participates in amino-acid biosynthesis; glycine biosynthesis; glycine from L-serine: step 1/1. Its function is as follows. Catalyzes the reversible interconversion of serine and glycine with tetrahydrofolate (THF) serving as the one-carbon carrier. This reaction serves as the major source of one-carbon groups required for the biosynthesis of purines, thymidylate, methionine, and other important biomolecules. Also exhibits THF-independent aldolase activity toward beta-hydroxyamino acids, producing glycine and aldehydes, via a retro-aldol mechanism. In Chlamydia felis (strain Fe/C-56) (Chlamydophila felis), this protein is Serine hydroxymethyltransferase.